Reading from the N-terminus, the 356-residue chain is Probable L-asparaginase 4 (356 aa).

A signal peptide spans 1–22 (MWGFIVTCGIFLVLLCQLRLLS). The region spanning 36 to 356 (PNVTVFAMGG…RDIEGLFSIK (321 aa)) is the Asparaginase/glutaminase domain. Asn-37 carries N-linked (GlcNAc...) asparagine glycosylation. Thr-46 acts as the O-isoaspartyl threonine intermediate in catalysis. Asn-52 is a glycosylation site (N-linked (GlcNAc...) asparagine). Substrate is bound by residues Ser-93 and 126-127 (TD). Asn-176 is a glycosylation site (N-linked (GlcNAc...) asparagine).

The protein belongs to the asparaginase 1 family.

Its subcellular location is the secreted. It is found in the cell wall. The catalysed reaction is L-asparagine + H2O = L-aspartate + NH4(+). In Schizosaccharomyces pombe (strain 972 / ATCC 24843) (Fission yeast), this protein is Probable L-asparaginase 4.